A 324-amino-acid polypeptide reads, in one-letter code: Sperm acrosome membrane-associated protein 6 (324 aa).

Residues 1–26 form the signal peptide; the sequence is MALLALASAVPSALLALAVFRVPAWA. The short motif at 27–30 is the CXXC motif element; the sequence is CLLC. 6 disulfides stabilise this stretch: Cys27-Cys139, Cys30-Cys142, Cys41-Cys55, Cys124-Cys147, Cys128-Cys153, and Cys170-Cys226. Residues 27 to 295 lie on the Extracellular side of the membrane; sequence CLLCFTTYSE…RPEALTPSNL (269 aa). A CXXC motif motif is present at residues 139–142; the sequence is CSGC. Residues 150-236 enclose the Ig-like domain; the sequence is PLDCPVQDVT…VIKQDQRPLA (87 aa). Residue Asn243 is glycosylated (N-linked (GlcNAc...) asparagine). Residues 296–316 form a helical membrane-spanning segment; it reads FLLAVLGALASASATVLAWMF. The Cytoplasmic segment spans residues 317 to 324; the sequence is FRWYCSGN.

It belongs to the SPACA6 family. As to quaternary structure, forms a complex with IZUMO1 and TMEM81 on spermatocyte cell membrane required for fertilization. Detected at the sperm head, equatorial region, neck and midpiece (at protein level). Expressed in testis.

It is found in the cytoplasmic vesicle. Its subcellular location is the secretory vesicle. The protein localises to the acrosome membrane. Its function is as follows. Sperm protein required for fusion of sperm with the egg membrane during fertilization. May regulate the expression of sperm surface protein DCST2. The chain is Sperm acrosome membrane-associated protein 6 from Homo sapiens (Human).